Here is a 773-residue protein sequence, read N- to C-terminus: Cadherin-5 (773 aa).

A signal peptide spans 1 to 18 (MKKLILLFSLFLAPAFSY). The propeptide occupies 19–40 (KENQKINQNFSSNNTSHKRLKR). Residues Asn-27, Asn-31, and Asn-32 are each glycosylated (N-linked (GlcNAc...) asparagine). Cadherin domains follow at residues 39–144 (KRDW…APIF), 145–251 (VQKI…FPVF), 252–366 (KHPS…PPVF), 367–474 (TKLS…APEL), and 474–582 (LVYP…DFTF). At 41 to 595 (DWIWNRMHIR…RAKQVGVSVQ (555 aa)) the chain is on the extracellular side. Ca(2+)-binding residues include Glu-51, Glu-52, Asp-102, and Glu-104. Residue Asn-121 is glycosylated (N-linked (GlcNAc...) asparagine). Ca(2+) is bound by residues Asp-136, Ile-137, Asn-138, Asp-139, and Asn-140. Residue Asn-150 is glycosylated (N-linked (GlcNAc...) asparagine). The Ca(2+) site is built by Asp-170, Asp-172, His-179, and Asp-224. Residues Asn-263, Asn-437, Asn-519, and Asn-531 are each glycosylated (N-linked (GlcNAc...) asparagine). Residues 596-617 (ALVAIFICIFTIIAVIALLILL) form a helical membrane-spanning segment. At 618–773 (RKRHKKDLSG…GSEPNEDFVY (156 aa)) the chain is on the cytoplasmic side.

N-glycosylated. Post-translationally, O-glycosylated.

The protein localises to the cell junction. Its subcellular location is the adherens junction. It localises to the cell membrane. The protein resides in the cytoplasm. Cadherins are calcium-dependent cell adhesion proteins. They preferentially interact with themselves in a homophilic manner in connecting cells; cadherins may thus contribute to the sorting of heterogeneous cell types. This cadherin may play a important role in endothelial cell biology through control of the cohesion and organization of the intercellular junctions. Plays a role in coupling actin fibers to cell junctions in endothelial cells. Associates with CTNND1/p120-catenin to control CADH5 endocytosis. The polypeptide is Cadherin-5 (Gallus gallus (Chicken)).